The sequence spans 238 residues: Orotate phosphoribosyltransferase (238 aa).

Lysine 29 contacts 5-phospho-alpha-D-ribose 1-diphosphate. 37–38 serves as a coordination point for orotate; that stretch reads FF. 5-phospho-alpha-D-ribose 1-diphosphate is bound by residues 87 to 88, arginine 118, lysine 119, lysine 122, histidine 124, and 144 to 152; these read YK and DDVITAGTA. Positions 148 and 176 each coordinate orotate.

This sequence belongs to the purine/pyrimidine phosphoribosyltransferase family. PyrE subfamily. As to quaternary structure, homodimer.

The catalysed reaction is orotidine 5'-phosphate + diphosphate = orotate + 5-phospho-alpha-D-ribose 1-diphosphate. It functions in the pathway pyrimidine metabolism; UMP biosynthesis via de novo pathway; UMP from orotate: step 1/2. Its function is as follows. Catalyzes the transfer of a ribosyl phosphate group from 5-phosphoribose 1-diphosphate to orotate, leading to the formation of orotidine monophosphate (OMP). The sequence is that of Orotate phosphoribosyltransferase (URA5) from Coccidioides immitis (strain RS) (Valley fever fungus).